A 394-amino-acid polypeptide reads, in one-letter code: C-19 steroid 1alpha-hydroxylase (394 aa).

Positions 81, 85, 281, 335, 338, and 340 each coordinate heme b.

This sequence belongs to the cytochrome P450 family. Heme b serves as cofactor.

The enzyme catalyses testosterone + 2 reduced [2Fe-2S]-[ferredoxin] + O2 + 2 H(+) = 1alpha-hydroxytestosterone + 2 oxidized [2Fe-2S]-[ferredoxin] + H2O. It carries out the reaction androst-4-ene-3,17-dione + 2 reduced [2Fe-2S]-[ferredoxin] + O2 + 2 H(+) = 1alpha-hydroxyandrost-4-ene-3,17-dione + 2 oxidized [2Fe-2S]-[ferredoxin] + H2O. Functionally, hydroxylase that can catalyze the in vitro conversion of the sesquiterpenoid nootkatone, a natural organic compound produced by some plants, to at least five hydrophilic products. The native ferredoxin reductase FdR_B and either Fdx2 or Fdx8 ferredoxins can act as the redox partners for the conversion of nootkatone. In addition, acts as a steroid 1alpha-hydroxylase, when associated in vitro with the surrogate redox partners bovine adrenodoxin (Adx) and adrenodoxin reductase (Adr). Acts on several C-19 steroid substrates, including testosterone and androstenedione, which are hydroxylated to 1alpha-hydroxytestosterone and 1alpha-hydroxyandrostenedione, respectively. Can use their derivatives testosterone-acetate and 11-oxoandrostenedione, but not vitamin D3 and 25-hydroxyvitamin D3. Also catalyzes the hydroxylation of the C-21 steroid 11-deoxycorticosterone to 1alpha-hydroxy-11-deoxycorticosterone. Catalyzes the hydroxylation of the C-21 steroid progesterone, leading to the formation of seven products: two major (1alpha-hydroxyprogesterone and 17alpha-hydroxyprogesterone) and five minor products. This chain is C-19 steroid 1alpha-hydroxylase, found in Sorangium cellulosum (strain So ce56) (Polyangium cellulosum (strain So ce56)).